Here is a 423-residue protein sequence, read N- to C-terminus: Endochitinase 1 (423 aa).

An N-terminal signal peptide occupies residues 1-22 (MPSLFAQSLAIIATLQATLGLA). The region spanning 39-401 (YVNAVYFTNW…GTSSNKLGGP (363 aa)) is the GH18 domain. Residues Asn74, Asn78, and Asn96 are each glycosylated (N-linked (GlcNAc...) asparagine). Chitin contacts are provided by residues 103–104 (GT) and 130–133 (GGWT). The active-site Proton donor is the Glu172. Residues Tyr173 and 238 to 241 (MAYD) each bind chitin. Residue Asn248 is glycosylated (N-linked (GlcNAc...) asparagine). Trp378 is a chitin binding site. Positions 380–423 (ASSDRSGSQSLIGTSSNKLGGPDSTENLLNYPDSKYDNMRKQMA) are disordered. Over residues 383 to 407 (DRSGSQSLIGTSSNKLGGPDSTENL) the composition is skewed to polar residues. Positions 413–423 (SKYDNMRKQMA) are enriched in basic and acidic residues.

This sequence belongs to the glycosyl hydrolase 18 family. Chitinase class V subfamily.

It is found in the secreted. The enzyme catalyses Random endo-hydrolysis of N-acetyl-beta-D-glucosaminide (1-&gt;4)-beta-linkages in chitin and chitodextrins.. Secreted chitinase involved in the degradation of chitin, a component of the cell walls of fungi and exoskeletal elements of some animals (including worms and arthropods). Participates in the infection process and directly acts in the penetration process of the host cuticle. The chain is Endochitinase 1 (chit1) from Metarhizium anisopliae (Entomophthora anisopliae).